Here is a 321-residue protein sequence, read N- to C-terminus: Mitochondrial coenzyme A transporter SLC25A42 (321 aa).

3 Solcar repeats span residues 33-119 (RSVL…YKGI), 131-216 (LPPV…LKKT), and 226-314 (PFPY…TQIL). Helical transmembrane passes span 35-55 (VLNS…AVAP), 91-111 (LWRG…IQFC), 137-154 (LLAG…TYPL), 191-208 (GFTP…LSFF), 232-252 (LVFG…LDVV), and 295-315 (VKGP…QILL).

The protein belongs to the mitochondrial carrier (TC 2.A.29) family.

It is found in the mitochondrion inner membrane. The enzyme catalyses ADP(out) + CoA(in) = ADP(in) + CoA(out). It catalyses the reaction 3'-dephospho-CoA(in) + ADP(out) = 3'-dephospho-CoA(out) + ADP(in). It carries out the reaction adenosine 3',5'-bisphosphate(in) + ADP(out) = adenosine 3',5'-bisphosphate(out) + ADP(in). The catalysed reaction is AMP(in) + ADP(out) = AMP(out) + ADP(in). The enzyme catalyses dADP(in) + ADP(out) = dADP(out) + ADP(in). It catalyses the reaction ADP(in) + ATP(out) = ADP(out) + ATP(in). In terms of biological role, mitochondrial carrier mediating the transport of coenzyme A (CoA) in mitochondria in exchange for intramitochondrial (deoxy)adenine nucleotides and adenosine 3',5'-diphosphate. This Danio rerio (Zebrafish) protein is Mitochondrial coenzyme A transporter SLC25A42 (slc25a42).